The sequence spans 153 residues: Aspartate carbamoyltransferase regulatory chain (153 aa).

Zn(2+)-binding residues include Cys-109, Cys-114, Cys-138, and Cys-141.

This sequence belongs to the PyrI family. In terms of assembly, contains catalytic and regulatory chains. Zn(2+) serves as cofactor.

Involved in allosteric regulation of aspartate carbamoyltransferase. The protein is Aspartate carbamoyltransferase regulatory chain of Shigella flexneri serotype 5b (strain 8401).